The following is a 539-amino-acid chain: Putative cysteine ligase BshC (539 aa).

ADP contacts are provided by residues S146 and 384 to 386 (ERH). Positions 455 to 475 (LLKNAAFIQDQLQFLERTVMK) form a coiled coil. Residues 490 to 493 (RIQN), W506, and Y510 each bind ADP.

It belongs to the BshC family. Homodimer in solution.

Functionally, involved in bacillithiol (BSH) biosynthesis. May catalyze the last step of the pathway, the addition of cysteine to glucosamine malate (GlcN-Mal) to generate BSH. The polypeptide is Putative cysteine ligase BshC (Bacillus subtilis (strain 168)).